The primary structure comprises 122 residues: Large ribosomal subunit protein uL14 (122 aa).

The protein belongs to the universal ribosomal protein uL14 family. Part of the 50S ribosomal subunit. Forms a cluster with proteins L3 and L19. In the 70S ribosome, L14 and L19 interact and together make contacts with the 16S rRNA in bridges B5 and B8.

Its function is as follows. Binds to 23S rRNA. Forms part of two intersubunit bridges in the 70S ribosome. This is Large ribosomal subunit protein uL14 from Borrelia hermsii (strain HS1 / DAH).